The following is an 87-amino-acid chain: Small ribosomal subunit protein uS15 (87 aa).

Belongs to the universal ribosomal protein uS15 family. As to quaternary structure, part of the 30S ribosomal subunit. Forms a bridge to the 50S subunit in the 70S ribosome, contacting the 23S rRNA.

In terms of biological role, one of the primary rRNA binding proteins, it binds directly to 16S rRNA where it helps nucleate assembly of the platform of the 30S subunit by binding and bridging several RNA helices of the 16S rRNA. Functionally, forms an intersubunit bridge (bridge B4) with the 23S rRNA of the 50S subunit in the ribosome. This is Small ribosomal subunit protein uS15 from Clostridium acetobutylicum (strain ATCC 824 / DSM 792 / JCM 1419 / IAM 19013 / LMG 5710 / NBRC 13948 / NRRL B-527 / VKM B-1787 / 2291 / W).